The sequence spans 310 residues: uncharacterized protein (310 aa).

It belongs to the YiaX1 family.

This is an uncharacterized protein from Salmonella typhimurium (strain LT2 / SGSC1412 / ATCC 700720).